The chain runs to 314 residues: Tetraacyldisaccharide 4'-kinase (314 aa).

61-68 (IVGGSGKT) contacts ATP.

It belongs to the LpxK family.

The catalysed reaction is a lipid A disaccharide + ATP = a lipid IVA + ADP + H(+). The protein operates within glycolipid biosynthesis; lipid IV(A) biosynthesis; lipid IV(A) from (3R)-3-hydroxytetradecanoyl-[acyl-carrier-protein] and UDP-N-acetyl-alpha-D-glucosamine: step 6/6. In terms of biological role, transfers the gamma-phosphate of ATP to the 4'-position of a tetraacyldisaccharide 1-phosphate intermediate (termed DS-1-P) to form tetraacyldisaccharide 1,4'-bis-phosphate (lipid IVA). The protein is Tetraacyldisaccharide 4'-kinase of Aliarcobacter butzleri (strain RM4018) (Arcobacter butzleri).